The following is a 611-amino-acid chain: Dihydroxy-acid dehydratase (611 aa).

A Mg(2+)-binding site is contributed by Asp81. Cys122 is a binding site for [2Fe-2S] cluster. Asp123 and Lys124 together coordinate Mg(2+). Residue Lys124 is modified to N6-carboxylysine. Cys195 contributes to the [2Fe-2S] cluster binding site. Glu491 is a binding site for Mg(2+). Ser517 (proton acceptor) is an active-site residue.

It belongs to the IlvD/Edd family. In terms of assembly, homodimer. The cofactor is [2Fe-2S] cluster. Requires Mg(2+) as cofactor.

It carries out the reaction (2R)-2,3-dihydroxy-3-methylbutanoate = 3-methyl-2-oxobutanoate + H2O. The catalysed reaction is (2R,3R)-2,3-dihydroxy-3-methylpentanoate = (S)-3-methyl-2-oxopentanoate + H2O. Its pathway is amino-acid biosynthesis; L-isoleucine biosynthesis; L-isoleucine from 2-oxobutanoate: step 3/4. It participates in amino-acid biosynthesis; L-valine biosynthesis; L-valine from pyruvate: step 3/4. Functionally, functions in the biosynthesis of branched-chain amino acids. Catalyzes the dehydration of (2R,3R)-2,3-dihydroxy-3-methylpentanoate (2,3-dihydroxy-3-methylvalerate) into 2-oxo-3-methylpentanoate (2-oxo-3-methylvalerate) and of (2R)-2,3-dihydroxy-3-methylbutanoate (2,3-dihydroxyisovalerate) into 2-oxo-3-methylbutanoate (2-oxoisovalerate), the penultimate precursor to L-isoleucine and L-valine, respectively. In Brucella melitensis biotype 1 (strain ATCC 23456 / CCUG 17765 / NCTC 10094 / 16M), this protein is Dihydroxy-acid dehydratase.